We begin with the raw amino-acid sequence, 337 residues long: uncharacterized protein (337 aa).

Residues 3–174 (IAVRGGHNFK…IGKLIAEAIN (172 aa)) enclose the MurNAc-LAA domain.

The protein to C.perfringens pIP404 ORF10.

This is an uncharacterized protein from Clostridium perfringens (strain 13 / Type A).